The sequence spans 338 residues: DNA-directed RNA polymerase subunit alpha (338 aa).

The interval 1-234 (MIHKNWAELI…DQLSIFVNFD (234 aa)) is alpha N-terminal domain (alpha-NTD). An alpha C-terminal domain (alpha-CTD) region spans residues 250–338 (FNPLLLKKVD…DLAKKFEDAF (89 aa)).

It belongs to the RNA polymerase alpha chain family. In terms of assembly, homodimer. The RNAP catalytic core consists of 2 alpha, 1 beta, 1 beta' and 1 omega subunit. When a sigma factor is associated with the core the holoenzyme is formed, which can initiate transcription.

It catalyses the reaction RNA(n) + a ribonucleoside 5'-triphosphate = RNA(n+1) + diphosphate. In terms of biological role, DNA-dependent RNA polymerase catalyzes the transcription of DNA into RNA using the four ribonucleoside triphosphates as substrates. This Ruegeria pomeroyi (strain ATCC 700808 / DSM 15171 / DSS-3) (Silicibacter pomeroyi) protein is DNA-directed RNA polymerase subunit alpha.